The chain runs to 86 residues: Sec-independent protein translocase protein TatA (86 aa).

Residues 1-21 (MGISIWQLLIILAIVLVLFGA) traverse the membrane as a helical segment.

The protein belongs to the TatA/E family. As to quaternary structure, the Tat system comprises two distinct complexes: a TatABC complex, containing multiple copies of TatA, TatB and TatC subunits, and a separate TatA complex, containing only TatA subunits. Substrates initially bind to the TatABC complex, which probably triggers association of the separate TatA complex to form the active translocon.

Its subcellular location is the cell inner membrane. In terms of biological role, part of the twin-arginine translocation (Tat) system that transports large folded proteins containing a characteristic twin-arginine motif in their signal peptide across membranes. TatA could form the protein-conducting channel of the Tat system. The chain is Sec-independent protein translocase protein TatA from Hydrogenovibrio crunogenus (strain DSM 25203 / XCL-2) (Thiomicrospira crunogena).